We begin with the raw amino-acid sequence, 5255 residues long: Bacitracin synthase 1 (5255 aa).

The tract at residues 39–612 (LHELFEEQAM…IKELSAFIEA (574 aa)) is domain 1 (isoleucine-activating). A compositionally biased stretch (basic and acidic residues) spans 519 to 531 (VDRKALPEPDRTA). Residues 519–542 (VDRKALPEPDRTAGAENEYEAPRN) are disordered. The region spanning 539-614 (APRNETEEKL…ELSAFIEANH (76 aa)) is the Carrier 1 domain. Ser-574 is modified (O-(pantetheine 4'-phosphoryl)serine). The cyclization stretch occupies residues 621–1037 (TLVTRAADPE…ITWDYVEQIF (417 aa)). The interval 1109–1648 (HHDEVMTYQE…FKNDTIIALD (540 aa)) is domain 2 (cysteine-activating). 4 consecutive Carrier domains span residues 1580–1655 (LPEN…KNRE), 2616–2691 (APRD…VRRR), 3659–3733 (PPRN…TEET), and 5166–5241 (APRN…LTAE). Ser-1615, Ser-2651, Ser-3694, and Ser-5201 each carry O-(pantetheine 4'-phosphoryl)serine. A domain 3 (leucine-activating) region spans residues 2124–2689 (GKAIHQLFEE…IKGLRDISVR (566 aa)). The domain 4 (glutamine-activating) stretch occupies residues 3164–3732 (DHPAVAFGDE…KDLSRFITEE (569 aa)). The interval 4668-5249 (LHELFEEQAM…AEAESAVSEE (582 aa)) is domain 5 (isoleucine-activating).

It belongs to the ATP-dependent AMP-binding enzyme family. In terms of assembly, large multienzyme complex of BA1, BA2 and BA3. It depends on pantetheine 4'-phosphate as a cofactor.

It carries out the reaction L-glutamate = D-glutamate. The protein operates within antibiotic biosynthesis; bacitracin biosynthesis. In terms of biological role, activates five amino acids, incorporates two D-amino acids, releases and cyclizes the mature bacitracin. This is Bacitracin synthase 1 (bacA) from Bacillus licheniformis.